The primary structure comprises 180 residues: Large ribosomal subunit protein uL5 (180 aa).

Belongs to the universal ribosomal protein uL5 family. In terms of assembly, part of the 50S ribosomal subunit; part of the 5S rRNA/L5/L18/L25 subcomplex. Contacts the 5S rRNA and the P site tRNA. Forms a bridge to the 30S subunit in the 70S ribosome.

Functionally, this is one of the proteins that bind and probably mediate the attachment of the 5S RNA into the large ribosomal subunit, where it forms part of the central protuberance. In the 70S ribosome it contacts protein S13 of the 30S subunit (bridge B1b), connecting the 2 subunits; this bridge is implicated in subunit movement. Contacts the P site tRNA; the 5S rRNA and some of its associated proteins might help stabilize positioning of ribosome-bound tRNAs. The protein is Large ribosomal subunit protein uL5 of Latilactobacillus sakei subsp. sakei (strain 23K) (Lactobacillus sakei subsp. sakei).